The following is a 281-amino-acid chain: Aliphatic sulfonates import ATP-binding protein SsuB (281 aa).

One can recognise an ABC transporter domain in the interval 40 to 263; sequence LDIRGLRKSF…QRGSAELAAL (224 aa). 72-79 is an ATP binding site; it reads GRSGCGKS.

The protein belongs to the ABC transporter superfamily. Aliphatic sulfonates importer (TC 3.A.1.17.2) family. In terms of assembly, the complex is composed of two ATP-binding proteins (SsuB), two transmembrane proteins (SsuC) and a solute-binding protein (SsuA).

Its subcellular location is the cell inner membrane. It carries out the reaction ATP + H2O + aliphatic sulfonate-[sulfonate-binding protein]Side 1 = ADP + phosphate + aliphatic sulfonateSide 2 + [sulfonate-binding protein]Side 1.. Its function is as follows. Part of the ABC transporter complex SsuABC involved in aliphatic sulfonates import. Responsible for energy coupling to the transport system. The polypeptide is Aliphatic sulfonates import ATP-binding protein SsuB (Rhodopseudomonas palustris (strain ATCC BAA-98 / CGA009)).